Consider the following 492-residue polypeptide: MHKTSEQTLIFEISKAGRVAYSLPLPTVDEVAAEELLPAHLLRQEDVELPEVSELDLVRHYTALSNRNHGVDSGFYPLGSCTMKYNPKINEDMARLPGFAHIHPLQPVESVQGALGLMYDLQEKLAVITGMDEVTLQPAAGAHGEWTGLMLIKAYHHARGDFKRTKVLVPDSAHGTNPASASVAGFDTVTVLSDERGLVDLADLKSKVGEDTAALMLTNPNTLGLFESDIVEIAKAVHEAGGKLYYDGANSNAIMGIARPGDMGFDVVHLNLHKTFTGPHGGGGPGSGPVGVKKDLIPYLPKPIVAKTAEGFVLDYDRPESIGRVKPFYGNFGINVRAYSYIRTMGGAGLARVSKEAVLNANYMLARLKGAYDAPYDVYCKHEFVLSGRRQKALGVRTLDIAKRLLDFGYHPPTIYFPLNVEECIMIEPTETESKETLDDFCDAMLQIAKEVEETPDVVLNAPHTTVVKRMDETLAARKPILRYQPKQEVHV.

Residue Lys-274 is modified to N6-(pyridoxal phosphate)lysine.

The protein belongs to the GcvP family. C-terminal subunit subfamily. The glycine cleavage system is composed of four proteins: P, T, L and H. In this organism, the P 'protein' is a heterodimer of two subunits. It depends on pyridoxal 5'-phosphate as a cofactor.

The enzyme catalyses N(6)-[(R)-lipoyl]-L-lysyl-[glycine-cleavage complex H protein] + glycine + H(+) = N(6)-[(R)-S(8)-aminomethyldihydrolipoyl]-L-lysyl-[glycine-cleavage complex H protein] + CO2. The glycine cleavage system catalyzes the degradation of glycine. The P protein binds the alpha-amino group of glycine through its pyridoxal phosphate cofactor; CO(2) is released and the remaining methylamine moiety is then transferred to the lipoamide cofactor of the H protein. This chain is Probable glycine dehydrogenase (decarboxylating) subunit 2, found in Exiguobacterium sibiricum (strain DSM 17290 / CCUG 55495 / CIP 109462 / JCM 13490 / 255-15).